The sequence spans 267 residues: Indole-3-glycerol phosphate synthase (267 aa).

The protein belongs to the TrpC family.

The enzyme catalyses 1-(2-carboxyphenylamino)-1-deoxy-D-ribulose 5-phosphate + H(+) = (1S,2R)-1-C-(indol-3-yl)glycerol 3-phosphate + CO2 + H2O. Its pathway is amino-acid biosynthesis; L-tryptophan biosynthesis; L-tryptophan from chorismate: step 4/5. This is Indole-3-glycerol phosphate synthase from Deinococcus radiodurans (strain ATCC 13939 / DSM 20539 / JCM 16871 / CCUG 27074 / LMG 4051 / NBRC 15346 / NCIMB 9279 / VKM B-1422 / R1).